Consider the following 475-residue polypeptide: MGFRFLDIVKPFTSLVPEVGQPDRKIPFREKVLWTAICLFIFLVCSQIPLYGIRSTDSSDPFYWAKVIMASNRGTLMELGISPIVTSGMVMQLLAGAKLIEIDQSVKADRDLFSAAQKLFGMLICVGQGVAYIWSGSYGDPAVLGFGNCFLIVLQLFFAGIIVMLLDELLQKGYGIGSGISLFIATNICETIVWKTFSPTTVSVGKGTEFEGAVIALFHLLLTRNDKVRALKEAFYRQNLPNITNLLATVLIFMVVIYFQGFRVDLPVKSTRVSGQQGTYPIKLFYTSNIPIILQSALVSNLYFISQLLYRRFPDNILVNLFGAWRTSEYSQQMIPVSGLTYYISSPNNMSAVLADPFHALFYITFMLTSCALFSKVWIEVSGSSARDVAKQLKDQQMTMKGHRDTSVIKELNRYIPTAAAFGGLCIGALTVVADFMGAIGSGTGILLAVTIIYQYFETFVKEQQELSGGIGGLF.

The Cytoplasmic segment spans residues 1–32; sequence MGFRFLDIVKPFTSLVPEVGQPDRKIPFREKV. Residues 33 to 53 form a helical membrane-spanning segment; the sequence is LWTAICLFIFLVCSQIPLYGI. Topologically, residues 54–75 are lumenal; that stretch reads RSTDSSDPFYWAKVIMASNRGT. Residues 76-96 form a helical membrane-spanning segment; the sequence is LMELGISPIVTSGMVMQLLAG. Topologically, residues 97-118 are cytoplasmic; it reads AKLIEIDQSVKADRDLFSAAQK. A helical transmembrane segment spans residues 119–139; the sequence is LFGMLICVGQGVAYIWSGSYG. Over 140 to 145 the chain is Lumenal; it reads DPAVLG. A helical membrane pass occupies residues 146-166; sequence FGNCFLIVLQLFFAGIIVMLL. Topologically, residues 167–173 are cytoplasmic; it reads DELLQKG. A helical membrane pass occupies residues 174–194; that stretch reads YGIGSGISLFIATNICETIVW. Residues 195 to 241 lie on the Lumenal side of the membrane; that stretch reads KTFSPTTVSVGKGTEFEGAVIALFHLLLTRNDKVRALKEAFYRQNLP. A helical membrane pass occupies residues 242 to 262; sequence NITNLLATVLIFMVVIYFQGF. Over 263–289 the chain is Cytoplasmic; it reads RVDLPVKSTRVSGQQGTYPIKLFYTSN. The helical transmembrane segment at 290–310 threads the bilayer; the sequence is IPIILQSALVSNLYFISQLLY. At 311-353 the chain is on the lumenal side; the sequence is RRFPDNILVNLFGAWRTSEYSQQMIPVSGLTYYISSPNNMSAV. The helical transmembrane segment at 354-374 threads the bilayer; the sequence is LADPFHALFYITFMLTSCALF. Residues 375 to 411 are Cytoplasmic-facing; sequence SKVWIEVSGSSARDVAKQLKDQQMTMKGHRDTSVIKE. The helical transmembrane segment at 412–434 threads the bilayer; sequence LNRYIPTAAAFGGLCIGALTVVA. Residues 435 to 440 lie on the Lumenal side of the membrane; the sequence is DFMGAI. The helical transmembrane segment at 441-461 threads the bilayer; it reads GSGTGILLAVTIIYQYFETFV. Residues 462 to 475 lie on the Cytoplasmic side of the membrane; that stretch reads KEQQELSGGIGGLF.

Belongs to the SecY/SEC61-alpha family. In terms of assembly, heterotrimeric complex composed of SEC61-alpha, SEC61-beta and SEC61-gamma.

The protein localises to the endoplasmic reticulum membrane. In terms of biological role, appears to play a crucial role in the insertion of secretory and membrane polypeptides into the ER. It is required for assembly of membrane and secretory proteins. Found to be tightly associated with membrane-bound ribosomes, either directly or through adaptor proteins. The sequence is that of Protein transport protein Sec61 subunit alpha (sec61a) from Dictyostelium discoideum (Social amoeba).